The chain runs to 137 residues: Transcription antitermination protein NusB (137 aa).

This sequence belongs to the NusB family.

In terms of biological role, involved in transcription antitermination. Required for transcription of ribosomal RNA (rRNA) genes. Binds specifically to the boxA antiterminator sequence of the ribosomal RNA (rrn) operons. The sequence is that of Transcription antitermination protein NusB from Finegoldia magna (strain ATCC 29328 / DSM 20472 / WAL 2508) (Peptostreptococcus magnus).